Here is a 299-residue protein sequence, read N- to C-terminus: Phosphoribosylaminoimidazole-succinocarboxamide synthase (299 aa).

Belongs to the SAICAR synthetase family.

It carries out the reaction 5-amino-1-(5-phospho-D-ribosyl)imidazole-4-carboxylate + L-aspartate + ATP = (2S)-2-[5-amino-1-(5-phospho-beta-D-ribosyl)imidazole-4-carboxamido]succinate + ADP + phosphate + 2 H(+). It participates in purine metabolism; IMP biosynthesis via de novo pathway; 5-amino-1-(5-phospho-D-ribosyl)imidazole-4-carboxamide from 5-amino-1-(5-phospho-D-ribosyl)imidazole-4-carboxylate: step 1/2. This Streptomyces coelicolor (strain ATCC BAA-471 / A3(2) / M145) protein is Phosphoribosylaminoimidazole-succinocarboxamide synthase.